Reading from the N-terminus, the 114-residue chain is Probable 4-amino-4-deoxy-L-arabinose-phosphoundecaprenol flippase subunit ArnE (114 aa).

Helical transmembrane passes span P41–L61, L64–S84, and Y94–L114. The EamA domain occupies L43–G112.

The protein belongs to the ArnE family. Heterodimer of ArnE and ArnF.

It is found in the cell inner membrane. Its pathway is bacterial outer membrane biogenesis; lipopolysaccharide biosynthesis. Functionally, translocates 4-amino-4-deoxy-L-arabinose-phosphoundecaprenol (alpha-L-Ara4N-phosphoundecaprenol) from the cytoplasmic to the periplasmic side of the inner membrane. This is Probable 4-amino-4-deoxy-L-arabinose-phosphoundecaprenol flippase subunit ArnE from Aeromonas hydrophila subsp. hydrophila (strain ATCC 7966 / DSM 30187 / BCRC 13018 / CCUG 14551 / JCM 1027 / KCTC 2358 / NCIMB 9240 / NCTC 8049).